The chain runs to 122 residues: Small ribosomal subunit protein uS13 (122 aa).

A disordered region spans residues 95-122; that stretch reads GLPVRGQRTHTNARTRKGPAKPIAGKKK.

This sequence belongs to the universal ribosomal protein uS13 family. In terms of assembly, part of the 30S ribosomal subunit. Forms a loose heterodimer with protein S19. Forms two bridges to the 50S subunit in the 70S ribosome.

Located at the top of the head of the 30S subunit, it contacts several helices of the 16S rRNA. In the 70S ribosome it contacts the 23S rRNA (bridge B1a) and protein L5 of the 50S subunit (bridge B1b), connecting the 2 subunits; these bridges are implicated in subunit movement. Contacts the tRNAs in the A and P-sites. The chain is Small ribosomal subunit protein uS13 from Rhodospirillum rubrum (strain ATCC 11170 / ATH 1.1.1 / DSM 467 / LMG 4362 / NCIMB 8255 / S1).